The chain runs to 212 residues: Redox-sensing transcriptional repressor Rex (212 aa).

The segment at residues 16 to 55 is a DNA-binding region (H-T-H motif); the sequence is IYYRYLNILLDADKTRVSSTELSEAVKVDSATIRRDFSYF. 90–95 provides a ligand contact to NAD(+); that stretch reads GVGNLG.

This sequence belongs to the transcriptional regulatory Rex family. Homodimer.

It is found in the cytoplasm. Its function is as follows. Modulates transcription in response to changes in cellular NADH/NAD(+) redox state. The sequence is that of Redox-sensing transcriptional repressor Rex from Levilactobacillus brevis (strain ATCC 367 / BCRC 12310 / CIP 105137 / JCM 1170 / LMG 11437 / NCIMB 947 / NCTC 947) (Lactobacillus brevis).